The sequence spans 151 residues: MKVIFTQDVRGKGNRGQVKEVPDGYAENFLIRKGLAKAATPQAMSALRGQQRLEEKKEAEKKTEAEAMKAKIEDDKTVVQIQSKAGEDSRLFGSIPSKQIAQALDKQYQIKVDKRKIDLKQPIRSLGFTNVTVNLFPGIDARIRVHVIEQK.

This sequence belongs to the bacterial ribosomal protein bL9 family.

In terms of biological role, binds to the 23S rRNA. In Lacticaseibacillus casei (strain BL23) (Lactobacillus casei), this protein is Large ribosomal subunit protein bL9.